Here is an 857-residue protein sequence, read N- to C-terminus: Dimethylglycine dehydrogenase, mitochondrial (857 aa).

Residues 1–43 (MLRLGALRLRGLALRSSQGRPSSAGLREGQESPPSPPEWKDRA) constitute a mitochondrion transit peptide. The disordered stretch occupies residues 15–39 (RSSQGRPSSAGLREGQESPPSPPEW). FAD contacts are provided by residues 52–53 (CV), 73–74 (EK), and 80–88 (GSTWHAAGL). The residue at position 84 (His84) is a Tele-8alpha-FAD histidine. The residue at position 107 (Lys107) is an N6-acetyllysine. At Lys141 the chain carries N6-acetyllysine; alternate. Lys141 carries the N6-succinyllysine; alternate modification. Lys161 bears the N6-acetyllysine mark. Val212 is an FAD binding site. Lys216 is modified (N6-acetyllysine). Position 244 (Trp244) interacts with FAD. Residues Lys310 and Lys312 each carry the N6-succinyllysine modification. Residues Lys328 and Lys353 each carry the N6-acetyllysine modification. FAD is bound at residue 390–395 (FGYGII). An N6-acetyllysine; alternate mark is found at Lys427, Lys469, and Lys516. Residues Lys427, Lys469, and Lys516 each carry the N6-succinyllysine; alternate modification. 573 to 575 (ELT) is a (6S)-5,6,7,8-tetrahydrofolate binding site. Lys648 is modified (N6-acetyllysine; alternate). Lys648 carries the post-translational modification N6-succinyllysine; alternate. Residues Tyr669, 676–678 (ELY), and Tyr737 each bind (6S)-5,6,7,8-tetrahydrofolate. Lys757 is modified (N6-acetyllysine). Lys786 carries the N6-acetyllysine; alternate modification. Position 786 is an N6-succinyllysine; alternate (Lys786). An N6-succinyllysine modification is found at Lys788.

Belongs to the GcvT family. The cofactor is FAD.

Its subcellular location is the mitochondrion. It catalyses the reaction (6S)-5,6,7,8-tetrahydrofolyl-(gamma-L-Glu)(n) + N,N-dimethylglycine + oxidized [electron-transfer flavoprotein] + H(+) = (6R)-5,10-methylenetetrahydrofolyl-(gamma-L-Glu)(n) + sarcosine + reduced [electron-transfer flavoprotein]. It functions in the pathway amine and polyamine degradation; betaine degradation; sarcosine from betaine: step 2/2. Catalyzes the demethylation of N,N-dimethylglycine to sarcosine. Also has activity with sarcosine in vitro. This chain is Dimethylglycine dehydrogenase, mitochondrial (Dmgdh), found in Rattus norvegicus (Rat).